We begin with the raw amino-acid sequence, 443 residues long: Ribulose bisphosphate carboxylase large chain (443 aa).

N89 and T139 together coordinate substrate. Residue K141 is the Proton acceptor of the active site. K143 serves as a coordination point for substrate. Mg(2+) is bound by residues K167, D169, and E170. An N6-carboxylysine modification is found at K167. The Proton acceptor role is filled by H260. 3 residues coordinate substrate: R261, H293, and S345.

It belongs to the RuBisCO large chain family. Type I subfamily. As to quaternary structure, heterohexadecamer of 8 large chains and 8 small chains; disulfide-linked. The disulfide link is formed within the large subunit homodimers. It depends on Mg(2+) as a cofactor. In terms of processing, the disulfide bond which can form in the large chain dimeric partners within the hexadecamer appears to be associated with oxidative stress and protein turnover.

It localises to the plastid. It is found in the chloroplast. It carries out the reaction 2 (2R)-3-phosphoglycerate + 2 H(+) = D-ribulose 1,5-bisphosphate + CO2 + H2O. The enzyme catalyses D-ribulose 1,5-bisphosphate + O2 = 2-phosphoglycolate + (2R)-3-phosphoglycerate + 2 H(+). Its function is as follows. RuBisCO catalyzes two reactions: the carboxylation of D-ribulose 1,5-bisphosphate, the primary event in carbon dioxide fixation, as well as the oxidative fragmentation of the pentose substrate in the photorespiration process. Both reactions occur simultaneously and in competition at the same active site. The sequence is that of Ribulose bisphosphate carboxylase large chain from Antirrhinum majus (Garden snapdragon).